We begin with the raw amino-acid sequence, 311 residues long: tRNA pseudouridine synthase B (311 aa).

D39 acts as the Nucleophile in catalysis. Residues 237-268 form a disordered region; it reads RELSEQETTEISFGRRIAAGPGAGTPDAATAE. The segment covering 254–268 has biased composition (low complexity); the sequence is AAGPGAGTPDAATAE.

This sequence belongs to the pseudouridine synthase TruB family. Type 1 subfamily.

The catalysed reaction is uridine(55) in tRNA = pseudouridine(55) in tRNA. Its function is as follows. Responsible for synthesis of pseudouridine from uracil-55 in the psi GC loop of transfer RNAs. The polypeptide is tRNA pseudouridine synthase B (Paenarthrobacter aurescens (strain TC1)).